A 197-amino-acid chain; its full sequence is Nucleoid occlusion factor SlmA (197 aa).

In terms of domain architecture, HTH tetR-type spans 7–67 (INRREHILQC…GLIDFIEESL (61 aa)). A DNA-binding region (H-T-H motif) is located at residues 30-49 (TTAKLAAEVGVSEAALYRHF).

Belongs to the nucleoid occlusion factor SlmA family. In terms of assembly, homodimer. Interacts with FtsZ.

The protein localises to the cytoplasm. The protein resides in the nucleoid. In terms of biological role, required for nucleoid occlusion (NO) phenomenon, which prevents Z-ring formation and cell division over the nucleoid. Acts as a DNA-associated cell division inhibitor that binds simultaneously chromosomal DNA and FtsZ, and disrupts the assembly of FtsZ polymers. SlmA-DNA-binding sequences (SBS) are dispersed on non-Ter regions of the chromosome, preventing FtsZ polymerization at these regions. The polypeptide is Nucleoid occlusion factor SlmA (Shewanella woodyi (strain ATCC 51908 / MS32)).